Reading from the N-terminus, the 304-residue chain is ATP phosphoribosyltransferase (304 aa).

Belongs to the ATP phosphoribosyltransferase family.

The protein resides in the cytoplasm. The catalysed reaction is 1-(5-phospho-beta-D-ribosyl)-ATP + diphosphate = 5-phospho-alpha-D-ribose 1-diphosphate + ATP. It participates in amino-acid biosynthesis; L-histidine biosynthesis; L-histidine from 5-phospho-alpha-D-ribose 1-diphosphate: step 1/9. Functionally, catalyzes the condensation of ATP and 5-phosphoribose 1-diphosphate to form N'-(5'-phosphoribosyl)-ATP (PR-ATP). Has a crucial role in the pathway because the rate of histidine biosynthesis seems to be controlled primarily by regulation of the enzymatic activity. The polypeptide is ATP phosphoribosyltransferase (HIS1) (Debaryomyces hansenii (strain ATCC 36239 / CBS 767 / BCRC 21394 / JCM 1990 / NBRC 0083 / IGC 2968) (Yeast)).